The primary structure comprises 316 residues: tRNA dimethylallyltransferase (316 aa).

ATP is bound at residue 17-24 (GPTASGKT). 19–24 (TASGKT) lines the substrate pocket. Interaction with substrate tRNA stretches follow at residues 42–45 (DSAL), 166–170 (QRLSR), and 247–252 (RCVGYR).

Belongs to the IPP transferase family. Monomer. The cofactor is Mg(2+).

The catalysed reaction is adenosine(37) in tRNA + dimethylallyl diphosphate = N(6)-dimethylallyladenosine(37) in tRNA + diphosphate. In terms of biological role, catalyzes the transfer of a dimethylallyl group onto the adenine at position 37 in tRNAs that read codons beginning with uridine, leading to the formation of N6-(dimethylallyl)adenosine (i(6)A). This is tRNA dimethylallyltransferase from Salmonella paratyphi A (strain ATCC 9150 / SARB42).